Reading from the N-terminus, the 358-residue chain is Low-specificity L-threonine aldolase 1 (358 aa).

Lys-207 bears the N6-(pyridoxal phosphate)lysine mark.

Belongs to the threonine aldolase family. Pyridoxal 5'-phosphate is required as a cofactor. As to expression, expressed in root tips, seedlings, carpels and seeds.

The enzyme catalyses L-threonine = acetaldehyde + glycine. It carries out the reaction L-allo-threonine = acetaldehyde + glycine. It functions in the pathway amino-acid degradation; L-threonine degradation via aldolase pathway; acetaldehyde and glycine from L-threonine: step 1/1. Threonine aldolase involved in threonine degradation to glycine. May play a role in the removal of L-allo-threonine. In Arabidopsis thaliana (Mouse-ear cress), this protein is Low-specificity L-threonine aldolase 1.